We begin with the raw amino-acid sequence, 546 residues long: CTP synthase (546 aa).

The segment at Met1 to Ile266 is amidoligase domain. Ser14 lines the CTP pocket. Position 14 (Ser14) interacts with UTP. ATP-binding positions include Ser15–Ile20 and Asp72. Residues Asp72 and Glu140 each contribute to the Mg(2+) site. CTP-binding positions include Asp147 to Glu149, Lys187 to Gln192, and Lys223. UTP-binding positions include Lys187–Gln192 and Lys223. Residue Lys239 to Val241 participates in ATP binding. The Glutamine amidotransferase type-1 domain occupies Thr291 to Gly542. L-glutamine is bound at residue Gly352. Residue Cys379 is the Nucleophile; for glutamine hydrolysis of the active site. L-glutamine-binding positions include Leu380 to Gln383, Glu403, and Arg470. Residues His515 and Glu517 contribute to the active site.

Belongs to the CTP synthase family. In terms of assembly, homotetramer.

It catalyses the reaction UTP + L-glutamine + ATP + H2O = CTP + L-glutamate + ADP + phosphate + 2 H(+). It carries out the reaction L-glutamine + H2O = L-glutamate + NH4(+). The enzyme catalyses UTP + NH4(+) + ATP = CTP + ADP + phosphate + 2 H(+). The protein operates within pyrimidine metabolism; CTP biosynthesis via de novo pathway; CTP from UDP: step 2/2. With respect to regulation, allosterically activated by GTP, when glutamine is the substrate; GTP has no effect on the reaction when ammonia is the substrate. The allosteric effector GTP functions by stabilizing the protein conformation that binds the tetrahedral intermediate(s) formed during glutamine hydrolysis. Inhibited by the product CTP, via allosteric rather than competitive inhibition. Catalyzes the ATP-dependent amination of UTP to CTP with either L-glutamine or ammonia as the source of nitrogen. Regulates intracellular CTP levels through interactions with the four ribonucleotide triphosphates. This is CTP synthase from Vibrio parahaemolyticus serotype O3:K6 (strain RIMD 2210633).